Here is a 423-residue protein sequence, read N- to C-terminus: N-acylneuraminate cytidylyltransferase B (423 aa).

Arginine 30, asparagine 40, arginine 88, serine 97, serine 99, and glutamine 120 together coordinate substrate. Arginine 178 is a catalytic residue.

This sequence belongs to the CMP-NeuNAc synthase family. Homotetramer.

It localises to the cytoplasm. It catalyses the reaction an N-acylneuraminate + CTP = a CMP-N-acyl-beta-neuraminate + diphosphate. It functions in the pathway amino-sugar metabolism; N-acetylneuraminate metabolism. Functionally, catalyzes the activation of 2-keto-3-deoxy-D-glycero-D-galacto-nononic acid (KDN) to cytidine 5'-monophosphate 2-keto-3-deoxy-D-glycero-D-galacto-nononic acid (CMP-KDN), a substrate required for the addition of sialic acid. Also has weak activity towards N-acetylneuraminic acid (NeuNAc) and N-glycolylneuraminic acid (Neu5Gc). This is N-acylneuraminate cytidylyltransferase B from Danio rerio (Zebrafish).